Here is a 112-residue protein sequence, read N- to C-terminus: PTS system lactose-specific EIIA component (112 aa).

The PTS EIIA type-3 domain maps to 6–104 (EEISMVGFAL…TRYMIRMFKR (99 aa)). Residue H80 is the Tele-phosphohistidine intermediate of the active site. H80 carries the post-translational modification Phosphohistidine; by HPr. Residue D83 participates in Mg(2+) binding.

Homotrimer. The cofactor is Mg(2+).

Its subcellular location is the cytoplasm. In terms of biological role, the phosphoenolpyruvate-dependent sugar phosphotransferase system (sugar PTS), a major carbohydrate active transport system, catalyzes the phosphorylation of incoming sugar substrates concomitantly with their translocation across the cell membrane. The enzyme II LacEF PTS system is involved in lactose transport. In Lacticaseibacillus casei (Lactobacillus casei), this protein is PTS system lactose-specific EIIA component.